A 478-amino-acid chain; its full sequence is Cysteine--tRNA ligase (478 aa).

C27 contributes to the Zn(2+) binding site. The short motif at 29-39 (PTTYNFIHLGN) is the 'HIGH' region element. Positions 207, 232, and 236 each coordinate Zn(2+). Positions 264-268 (KMSKS) match the 'KMSKS' region motif. K267 lines the ATP pocket.

This sequence belongs to the class-I aminoacyl-tRNA synthetase family. As to quaternary structure, monomer. Requires Zn(2+) as cofactor.

It localises to the cytoplasm. It carries out the reaction tRNA(Cys) + L-cysteine + ATP = L-cysteinyl-tRNA(Cys) + AMP + diphosphate. The chain is Cysteine--tRNA ligase from Desulforudis audaxviator (strain MP104C).